The primary structure comprises 740 residues: Catalase-peroxidase (740 aa).

Over residues 1–16 (MSENHDAIVTDAKTEE) the composition is skewed to basic and acidic residues. The interval 1 to 38 (MSENHDAIVTDAKTEETDGCPVAHGRAPHPTQGGGNRQ) is disordered. The tryptophyl-tyrosyl-methioninium (Trp-Tyr) (with M-257) cross-link spans 108-231 (WHSAGTYRIS…LGAVQMGLIY (124 aa)). The active-site Proton acceptor is the histidine 109. Positions 231-257 (YVNPEGPNGNPDPIAAARDIRETFRRM) form a cross-link, tryptophyl-tyrosyl-methioninium (Tyr-Met) (with W-108). Histidine 272 is a heme b binding site.

This sequence belongs to the peroxidase family. Peroxidase/catalase subfamily. As to quaternary structure, homodimer. The cofactor is heme b. In terms of processing, formation of the three residue Trp-Tyr-Met cross-link is important for the catalase, but not the peroxidase activity of the enzyme.

It catalyses the reaction H2O2 + AH2 = A + 2 H2O. The enzyme catalyses 2 H2O2 = O2 + 2 H2O. Functionally, bifunctional enzyme with both catalase and broad-spectrum peroxidase activity. This is Catalase-peroxidase from Streptomyces coelicolor (strain ATCC BAA-471 / A3(2) / M145).